The primary structure comprises 444 residues: UDP-N-acetylmuramoylalanine--D-glutamate ligase (444 aa).

109 to 115 (GSNGKTT) is a binding site for ATP.

It belongs to the MurCDEF family.

It is found in the cytoplasm. The enzyme catalyses UDP-N-acetyl-alpha-D-muramoyl-L-alanine + D-glutamate + ATP = UDP-N-acetyl-alpha-D-muramoyl-L-alanyl-D-glutamate + ADP + phosphate + H(+). It functions in the pathway cell wall biogenesis; peptidoglycan biosynthesis. Its function is as follows. Cell wall formation. Catalyzes the addition of glutamate to the nucleotide precursor UDP-N-acetylmuramoyl-L-alanine (UMA). The polypeptide is UDP-N-acetylmuramoylalanine--D-glutamate ligase (Bacteroides thetaiotaomicron (strain ATCC 29148 / DSM 2079 / JCM 5827 / CCUG 10774 / NCTC 10582 / VPI-5482 / E50)).